Consider the following 193-residue polypeptide: DNA damage-inducible transcript 4-like protein (193 aa).

It belongs to the DDIT4 family.

Its subcellular location is the cytoplasm. Functionally, inhibits cell growth by regulating the TOR signaling pathway upstream of the TSC1-TSC2 complex and downstream of AKT1. In Pongo abelii (Sumatran orangutan), this protein is DNA damage-inducible transcript 4-like protein (DDIT4L).